Consider the following 93-residue polypeptide: Probable Fe(2+)-trafficking protein (93 aa).

This sequence belongs to the Fe(2+)-trafficking protein family.

In terms of biological role, could be a mediator in iron transactions between iron acquisition and iron-requiring processes, such as synthesis and/or repair of Fe-S clusters in biosynthetic enzymes. The polypeptide is Probable Fe(2+)-trafficking protein (Acidithiobacillus ferrooxidans (strain ATCC 23270 / DSM 14882 / CIP 104768 / NCIMB 8455) (Ferrobacillus ferrooxidans (strain ATCC 23270))).